Reading from the N-terminus, the 85-residue chain is U4-theraphotoxin-Hhn1c (85 aa).

An N-terminal signal peptide occupies residues 1-22; that stretch reads MKVTLIAILTCAAVLVLHTTAA. A propeptide spanning residues 23–48 is cleaved from the precursor; that stretch reads EELEAESQLMEVGMPDTELAAVDEER. 3 disulfide bridges follow: Cys-52–Cys-66, Cys-56–Cys-77, and Cys-71–Cys-82.

Belongs to the neurotoxin 12 (Hwtx-2) family. 02 (Hwtx-2) subfamily. As to expression, expressed by the venom gland.

It localises to the secreted. Its function is as follows. Postsynaptic neurotoxin. The chain is U4-theraphotoxin-Hhn1c from Cyriopagopus hainanus (Chinese bird spider).